We begin with the raw amino-acid sequence, 142 residues long: Type 3 secretion system pilotin (142 aa).

A signal peptide spans 1–23 (MIRHGSNKLKIFILSILLLTLSG). A lipid anchor (N-palmitoyl cysteine) is attached at C24. C24 carries the S-diacylglycerol cysteine lipid modification.

The protein belongs to the MxiM family. As to quaternary structure, monomer. Interacts with the secretin MxiD/SctC.

The protein localises to the cell outer membrane. In terms of biological role, involved in the synthesis of the type III secretion system (T3SS), also called injectisome, which is used to inject bacterial effector proteins into eukaryotic host cells. Pilot protein that is required for the proper localization of the secretin MxiD/SctC in the outer membrane. Also influences both MxiD/SctC multimerization and stability. Required for both Ipa translocation and tissue culture cell invasion. Binds lipids. The protein is Type 3 secretion system pilotin of Shigella flexneri.